The chain runs to 694 residues: Elongation factor G (694 aa).

Positions 8-287 constitute a tr-type G domain; that stretch reads EDYRNFGIMA…AVISYLPSPV (280 aa). Residues 17-24, 86-90, and 140-143 contribute to the GTP site; these read AHIDAGKT, DTPGH, and NKMD.

Belongs to the TRAFAC class translation factor GTPase superfamily. Classic translation factor GTPase family. EF-G/EF-2 subfamily.

The protein resides in the cytoplasm. Its function is as follows. Catalyzes the GTP-dependent ribosomal translocation step during translation elongation. During this step, the ribosome changes from the pre-translocational (PRE) to the post-translocational (POST) state as the newly formed A-site-bound peptidyl-tRNA and P-site-bound deacylated tRNA move to the P and E sites, respectively. Catalyzes the coordinated movement of the two tRNA molecules, the mRNA and conformational changes in the ribosome. This Bartonella quintana (strain Toulouse) (Rochalimaea quintana) protein is Elongation factor G.